We begin with the raw amino-acid sequence, 651 residues long: Peptidoglycan D,D-transpeptidase MrdA (651 aa).

Residues 30–50 (LVAFLGILLLTGVLFTNIYQL) form a helical membrane-spanning segment. Residue Ser338 is the Acyl-ester intermediate of the active site.

Belongs to the transpeptidase family. MrdA subfamily.

It localises to the cell inner membrane. The enzyme catalyses Preferential cleavage: (Ac)2-L-Lys-D-Ala-|-D-Ala. Also transpeptidation of peptidyl-alanyl moieties that are N-acyl substituents of D-alanine.. The protein operates within cell wall biogenesis; peptidoglycan biosynthesis. Its function is as follows. Catalyzes cross-linking of the peptidoglycan cell wall. In Haemophilus influenzae (strain ATCC 51907 / DSM 11121 / KW20 / Rd), this protein is Peptidoglycan D,D-transpeptidase MrdA.